The following is a 306-amino-acid chain: ATP-dependent (S)-NAD(P)H-hydrate dehydratase (306 aa).

Residues 4 to 300 (LIDLFKPMIP…NQISNGFEDL (297 aa)) enclose the YjeF C-terminal domain. (6S)-NADPHX is bound by residues Gly104 and 157-163 (NFVEFKS). Residues 197 to 201 (KGKED) and 216 to 225 (GMPRRCGGQG) contribute to the ATP site. Asp226 contacts (6S)-NADPHX.

It belongs to the NnrD/CARKD family. Mg(2+) is required as a cofactor.

The enzyme catalyses (6S)-NADHX + ATP = ADP + phosphate + NADH + H(+). It catalyses the reaction (6S)-NADPHX + ATP = ADP + phosphate + NADPH + H(+). In terms of biological role, catalyzes the dehydration of the S-form of NAD(P)HX at the expense of ATP, which is converted to ADP. Together with NAD(P)HX epimerase, which catalyzes the epimerization of the S- and R-forms, the enzyme allows the repair of both epimers of NAD(P)HX, a damaged form of NAD(P)H that is a result of enzymatic or heat-dependent hydration. The sequence is that of ATP-dependent (S)-NAD(P)H-hydrate dehydratase from Dictyostelium discoideum (Social amoeba).